Here is a 384-residue protein sequence, read N- to C-terminus: DNA polymerase IV (384 aa).

One can recognise a UmuC domain in the interval 5 to 182 (IIHVDMDAFF…LPVTKVHGIG (178 aa)). Mg(2+)-binding residues include aspartate 9, methionine 10, and aspartate 103. Glutamate 104 is a catalytic residue.

This sequence belongs to the DNA polymerase type-Y family. In terms of assembly, monomer. Mg(2+) serves as cofactor.

Its subcellular location is the cytoplasm. It catalyses the reaction DNA(n) + a 2'-deoxyribonucleoside 5'-triphosphate = DNA(n+1) + diphosphate. In terms of biological role, poorly processive, error-prone DNA polymerase involved in translesion repair and untargeted mutagenesis. Copies undamaged DNA at stalled replication forks, which arise in vivo from mismatched or misaligned primer ends. These misaligned primers can be extended by PolIV. Exhibits no 3'-5' exonuclease (proofreading) activity. Involved in translesional synthesis. Primer extension fidelity in vitro is temperature-dependent. Inserts a correct base opposite templating bases at 70 degrees Celsius, but at 37 degrees Celsius in addition to correct base pairing, base transitions, transversions and frameshifts can occur. Preferably forms erroneous base pairs C:T. Bypasses 8-oxo-dG oxidative damage by incorporating dATP or dCTP opposite of the damaged DNA template site at both temperatures in vitro. In Caldanaerobacter subterraneus subsp. tengcongensis (strain DSM 15242 / JCM 11007 / NBRC 100824 / MB4) (Thermoanaerobacter tengcongensis), this protein is DNA polymerase IV.